The sequence spans 1373 residues: DNA-directed RNA polymerase subunit beta'' (1373 aa).

Positions 224, 296, 303, and 306 each coordinate Zn(2+).

The protein belongs to the RNA polymerase beta' chain family. RpoC2 subfamily. In terms of assembly, in plastids the minimal PEP RNA polymerase catalytic core is composed of four subunits: alpha, beta, beta', and beta''. When a (nuclear-encoded) sigma factor is associated with the core the holoenzyme is formed, which can initiate transcription. Requires Zn(2+) as cofactor.

It is found in the plastid. The protein localises to the chloroplast. The enzyme catalyses RNA(n) + a ribonucleoside 5'-triphosphate = RNA(n+1) + diphosphate. Functionally, DNA-dependent RNA polymerase catalyzes the transcription of DNA into RNA using the four ribonucleoside triphosphates as substrates. The chain is DNA-directed RNA polymerase subunit beta'' from Amborella trichopoda.